Reading from the N-terminus, the 646-residue chain is Interferon-induced GTP-binding protein MxA (646 aa).

Residues 34–307 (DLALPAIAVI…LVHHIQKSLP (274 aa)) form the Dynamin-type G domain. The interval 44-51 (GDQSSGKS) is G1 motif. Residue 44–51 (GDQSSGKS) participates in GTP binding. A G2 motif region spans residues 69–71 (VTR). The segment at 145–148 (DLPG) is G3 motif. GTP-binding positions include 145–149 (DLPGI) and 214–217 (TKPD). The tract at residues 214–217 (TKPD) is G4 motif. The segment at 246 to 249 (RCRG) is G5 motif. A GED domain is found at 546 to 637 (LREMRLHLKS…PLGHLLEVTF (92 aa)).

This sequence belongs to the TRAFAC class dynamin-like GTPase superfamily. Dynamin/Fzo/YdjA family.

It localises to the cytoplasm. The sequence is that of Interferon-induced GTP-binding protein MxA (mxa) from Danio rerio (Zebrafish).